A 512-amino-acid chain; its full sequence is Probable anion transporter 3, chloroplastic (512 aa).

Residues 1-44 constitute a chloroplast transit peptide; sequence MATVGSLKPLHHSSCSSSFPRNPIVNRKALLGFVFDSARKNQIR. 12 helical membrane-spanning segments follow: residues 102-124, 139-159, 167-187, 191-211, 228-248, 250-270, 324-344, 359-379, 396-416, 422-442, 462-482, and 486-506; these read VILTACMMCLCNADRVVMSVAVV, VVQSSFLWGYIFSSVIGGALV, VLAWGVALWSLATLLTPWAAA, LALLCVRAFFGLAEGVAMPSM, VGISMAGFHMGNVVGLLLTPL, LSSIGISGPFILFASLGLLWV, WAIIFANVTNNWGYFVLLSWM, AAWFSALPWATMAISGYYAGA, KIMQSIGFMGPGLSLLCLNFA, AAVFMTIALSLSSFSQAGFLL, AGTLAAIVSTIGTGYFVQWLG, and AFLTVTAFLYFATTVFWLLFA.

This sequence belongs to the major facilitator superfamily. Sodium/anion cotransporter (TC 2.A.1.14) family. In terms of tissue distribution, expressed in roots.

It localises to the plastid. Its subcellular location is the chloroplast membrane. Its function is as follows. Inorganic phosphate and probable anion transporter. The chain is Probable anion transporter 3, chloroplastic (ANTR3) from Arabidopsis thaliana (Mouse-ear cress).